Reading from the N-terminus, the 322-residue chain is Crystallin J1A (322 aa).

This sequence belongs to the ADP-ribosylglycohydrolase family. J1 crystallin subfamily. As to expression, expressed in the rhopalia. Present in both the large and small eyes.

This chain is Crystallin J1A, found in Tripedalia cystophora (Jellyfish).